The chain runs to 621 residues: Chaperone protein HscA homolog (621 aa).

It belongs to the heat shock protein 70 family.

Chaperone involved in the maturation of iron-sulfur cluster-containing proteins. Has a low intrinsic ATPase activity which is markedly stimulated by HscB. The protein is Chaperone protein HscA homolog of Cupriavidus taiwanensis (strain DSM 17343 / BCRC 17206 / CCUG 44338 / CIP 107171 / LMG 19424 / R1) (Ralstonia taiwanensis (strain LMG 19424)).